The following is a 208-amino-acid chain: MSTVVVKGNVNGGVQQPRRRRRQSLRRRANRVQPVVMVTAPGQPRRRRRRRGGNRRSRRTGVPRGRGSSETFVFTKDNLVGNSQGSFTFGPSLSDCPAFKDGILKAYHEYKITSILLQFVSEASSTSSGSIAYELDPHCKVSSLQSYVNKFQITKGGAKTYQARMINGVEWHDSSEDQCRILWKGNGKSSDPAGSFRVTIRVALQNPK.

Over residues 1–16 (MSTVVVKGNVNGGVQQ) the composition is skewed to low complexity. The segment at 1 to 69 (MSTVVVKGNV…TGVPRGRGSS (69 aa)) is disordered. Composition is skewed to basic residues over residues 17 to 30 (PRRR…RRAN) and 44 to 61 (PRRR…RRTG).

This sequence belongs to the luteoviruses capsid protein family.

Its subcellular location is the virion. Functionally, major capsid protein that self-assembles to form an icosahedral capsid with a T=3 symmetry, about 23 nm in diameter, and consisting of 180 capsid proteins monomers. Most of the 180 monomers are the major capsid protein, but a small percentage contain the minor capsid protein, which has a long C-terminal extension. The polypeptide is Major capsid protein (Solanum tuberosum (Potato)).